The following is a 471-amino-acid chain: Vitellogenic carboxypeptidase (471 aa).

A signal peptide spans 1–19 (MVKFHLLVLIAFTCYTCSD). N135 carries N-linked (GlcNAc...) asparagine glycosylation. Catalysis depends on residues S207, D391, and H448.

The protein belongs to the peptidase S10 family. Synthesized in the fat body of vitellogenic females, secreted into the hemolymph and accumulates in yolk bodies of developing oocytes.

The protein localises to the secreted. Functionally, may play a role in activating hydrolytic enzymes that are involved in the degradation of yolk proteins in developing embryos or may function as an exopeptidase in the degradation of vitellogenin. The sequence is that of Vitellogenic carboxypeptidase (VCP) from Aedes aegypti (Yellowfever mosquito).